We begin with the raw amino-acid sequence, 533 residues long: 2-isopropylmalate synthase (533 aa).

The region spanning 8 to 269 (ILIFDTTLRD…YFNPFLGRPA (262 aa)) is the Pyruvate carboxyltransferase domain. 4 residues coordinate Mn(2+): Asp17, His208, His210, and Asn244. Positions 408–533 (RLERVQVSCG…REHPPVVASL (126 aa)) are regulatory domain.

This sequence belongs to the alpha-IPM synthase/homocitrate synthase family. LeuA type 1 subfamily. As to quaternary structure, homodimer. Mn(2+) serves as cofactor.

The protein localises to the cytoplasm. It catalyses the reaction 3-methyl-2-oxobutanoate + acetyl-CoA + H2O = (2S)-2-isopropylmalate + CoA + H(+). It participates in amino-acid biosynthesis; L-leucine biosynthesis; L-leucine from 3-methyl-2-oxobutanoate: step 1/4. Its function is as follows. Catalyzes the condensation of the acetyl group of acetyl-CoA with 3-methyl-2-oxobutanoate (2-ketoisovalerate) to form 3-carboxy-3-hydroxy-4-methylpentanoate (2-isopropylmalate). The sequence is that of 2-isopropylmalate synthase from Synechocystis sp. (strain ATCC 27184 / PCC 6803 / Kazusa).